The primary structure comprises 311 residues: Taste receptor type 2 member 9 (311 aa).

The Extracellular segment spans residues 1-9 (MPSTIEAIY). Residues 10 to 32 (IILIAGELTIGIWGNGFIVLVNC) form a helical membrane-spanning segment. Topologically, residues 33 to 52 (IDWLKRRDVSLIDIILISLA) are cytoplasmic. The helical transmembrane segment at 53-72 (ISRICLLCVISLDGFFILLF) threads the bilayer. The Extracellular portion of the chain corresponds to 73 to 86 (PGTYDTNVLESIMD). A helical transmembrane segment spans residues 87-109 (AVWTFANNSSLWFTSCLSIFYLL). Residues 110–128 (KIANISHPFFFWLKLKINK) lie on the Cytoplasmic side of the membrane. The chain crosses the membrane as a helical span at residues 129 to 146 (VILAILLGSFLISLIISF). Residues 147–179 (PINGMWYNLFKVSHEENITWAFKVSTIPGAFKQ) lie on the Extracellular side of the membrane. Asparagine 163 carries N-linked (GlcNAc...) asparagine glycosylation. The helical transmembrane segment at 180–202 (LTLNLGAMVPFILCLISFFLLLF) threads the bilayer. Residues 203-233 (SLVRHTKQIQLHATGFRDPSTEAHMRAVKAV) are Cytoplasmic-facing. A helical transmembrane segment spans residues 234-256 (IIFLLLLILYYPVFLVMTSSTLI). Residues 257–260 (PQGK) lie on the Extracellular side of the membrane. A helical transmembrane segment spans residues 261–283 (LVLMIGDIVTVIFPSSHSFILIM). Residues 284–311 (GNSKLRAAFLKMLRFVKGFLRRRKPFVP) lie on the Cytoplasmic side of the membrane.

It belongs to the G-protein coupled receptor T2R family.

The protein resides in the membrane. Functionally, gustducin-coupled receptor implicated in the perception of bitter compounds in the oral cavity and the gastrointestinal tract. Signals through PLCB2 and the calcium-regulated cation channel TRPM5. The protein is Taste receptor type 2 member 9 (TAS2R9) of Macaca mulatta (Rhesus macaque).